The primary structure comprises 304 residues: Cell surface-binding protein OPG105 (304 aa).

Residues 1–235 (MPQQLSPINI…NDDTQVYYSG (235 aa)) form the Alpha-carbonic anhydrase domain. Residues 1-275 (MPQQLSPINI…YQKYIEGNKT (275 aa)) lie on the Virion surface side of the membrane. A helical transmembrane segment spans residues 276–294 (FAIIAIVFVFILTAILFFM). The Intravirion segment spans residues 295–304 (SQRYSREKQN).

It belongs to the alpha-carbonic anhydrase family. As to quaternary structure, homodimer; disulfide-linked. Apparently non-glycosylated.

The protein resides in the virion membrane. Functionally, binds to chondroitin sulfate on the cell surface to provide virion attachment to target cell. The chain is Cell surface-binding protein OPG105 (OPG105) from Vaccinia virus (strain Ankara) (VACV).